The chain runs to 938 residues: Ankyrin repeat and LEM domain-containing protein 2 (938 aa).

Topologically, residues methionine 1 to alanine 12 are lumenal. The helical; Signal-anchor for type III membrane protein transmembrane segment at alanine 13–valine 32 threads the bilayer. The Cytoplasmic segment spans residues arginine 33–leucine 938. An LEM domain is found at leucine 69–glutamine 113. Residues serine 259 and serine 268 each carry the phosphoserine modification. One copy of the ANK repeat lies at glycine 411–asparagine 440. Serine 488, serine 496, serine 512, and serine 528 each carry phosphoserine. Residues glycine 609–alanine 627 show a composition bias toward basic and acidic residues. The tract at residues glycine 609–serine 636 is disordered. Residues serine 662, serine 804, serine 896, and serine 914 each carry the phosphoserine modification. The disordered stretch occupies residues arginine 870 to serine 924.

It belongs to the ANKLE2 family. In terms of assembly, interacts with BAF/BANF1. Interacts with protein phosphatase 2A (PP2A) components PPP2C (PPP2CA or PPP2CB) and PPP2R1A. As to quaternary structure, (Microbial infection) May interact with non-structural protein 4A/NS4A from Zika virus strains Mr-766 or French Polynesia 10087PF/2013; the interaction may inhibit ANKLE2 function and contribute to defects in brain development, such as microcephaly.

Its subcellular location is the endoplasmic reticulum membrane. Involved in mitotic nuclear envelope reassembly by promoting dephosphorylation of BAF/BANF1 during mitotic exit. Coordinates the control of BAF/BANF1 dephosphorylation by inhibiting VRK1 kinase and promoting dephosphorylation of BAF/BANF1 by protein phosphatase 2A (PP2A), thereby facilitating nuclear envelope assembly. May regulate nuclear localization of VRK1 in non-dividing cells. It is unclear whether it acts as a real PP2A regulatory subunit or whether it is involved in recruitment of the PP2A complex. Involved in brain development. This is Ankyrin repeat and LEM domain-containing protein 2 (ANKLE2) from Homo sapiens (Human).